A 211-amino-acid polypeptide reads, in one-letter code: Thymidylate kinase (211 aa).

10–17 lines the ATP pocket; sequence GVEGCGKT.

It belongs to the thymidylate kinase family.

It carries out the reaction dTMP + ATP = dTDP + ADP. Its function is as follows. Phosphorylation of dTMP to form dTDP in both de novo and salvage pathways of dTTP synthesis. The chain is Thymidylate kinase from Nostoc punctiforme (strain ATCC 29133 / PCC 73102).